The primary structure comprises 334 residues: GTP 3',8-cyclase (334 aa).

Residues 11 to 235 (GFNRKVDYLR…VESAESSQGP (225 aa)) form the Radical SAM core domain. Arg-20 provides a ligand contact to GTP. Cys-27 and Cys-31 together coordinate [4Fe-4S] cluster. S-adenosyl-L-methionine is bound at residue Tyr-33. [4Fe-4S] cluster is bound at residue Cys-34. Arg-69 is a binding site for GTP. Residue Gly-73 participates in S-adenosyl-L-methionine binding. Thr-100 serves as a coordination point for GTP. Ser-124 contributes to the S-adenosyl-L-methionine binding site. Position 161 (Lys-161) interacts with GTP. Met-195 is a binding site for S-adenosyl-L-methionine. Cys-260 and Cys-263 together coordinate [4Fe-4S] cluster. 265 to 267 (RVR) contacts GTP. A [4Fe-4S] cluster-binding site is contributed by Cys-277.

This sequence belongs to the radical SAM superfamily. MoaA family. Monomer and homodimer. Requires [4Fe-4S] cluster as cofactor.

It carries out the reaction GTP + AH2 + S-adenosyl-L-methionine = (8S)-3',8-cyclo-7,8-dihydroguanosine 5'-triphosphate + 5'-deoxyadenosine + L-methionine + A + H(+). The protein operates within cofactor biosynthesis; molybdopterin biosynthesis. Functionally, catalyzes the cyclization of GTP to (8S)-3',8-cyclo-7,8-dihydroguanosine 5'-triphosphate. This Pseudomonas entomophila (strain L48) protein is GTP 3',8-cyclase.